We begin with the raw amino-acid sequence, 432 residues long: Phosphomethylpyrimidine synthase (432 aa).

Substrate contacts are provided by residues Asn66, Met95, Tyr124, His163, 185–187 (SRG), 226–229 (DGLR), and Glu265. His269 lines the Zn(2+) pocket. Position 292 (Tyr292) interacts with substrate. His333 is a binding site for Zn(2+). Residues Cys409, Cys412, and Cys416 each contribute to the [4Fe-4S] cluster site.

Belongs to the ThiC family. [4Fe-4S] cluster is required as a cofactor.

The catalysed reaction is 5-amino-1-(5-phospho-beta-D-ribosyl)imidazole + S-adenosyl-L-methionine = 4-amino-2-methyl-5-(phosphooxymethyl)pyrimidine + CO + 5'-deoxyadenosine + formate + L-methionine + 3 H(+). It functions in the pathway cofactor biosynthesis; thiamine diphosphate biosynthesis. Functionally, catalyzes the synthesis of the hydroxymethylpyrimidine phosphate (HMP-P) moiety of thiamine from aminoimidazole ribotide (AIR) in a radical S-adenosyl-L-methionine (SAM)-dependent reaction. The protein is Phosphomethylpyrimidine synthase of Desulfitobacterium hafniense (strain DSM 10664 / DCB-2).